The primary structure comprises 683 residues: DNA-directed RNA polymerase subunit beta' (683 aa).

Cysteine 69, cysteine 71, cysteine 87, and cysteine 90 together coordinate Zn(2+). The Mg(2+) site is built by aspartate 489, aspartate 491, and aspartate 493.

It belongs to the RNA polymerase beta' chain family. RpoC1 subfamily. In terms of assembly, in plastids the minimal PEP RNA polymerase catalytic core is composed of four subunits: alpha, beta, beta', and beta''. When a (nuclear-encoded) sigma factor is associated with the core the holoenzyme is formed, which can initiate transcription. Requires Mg(2+) as cofactor. Zn(2+) is required as a cofactor.

The protein localises to the plastid. It is found in the chloroplast. It catalyses the reaction RNA(n) + a ribonucleoside 5'-triphosphate = RNA(n+1) + diphosphate. Functionally, DNA-dependent RNA polymerase catalyzes the transcription of DNA into RNA using the four ribonucleoside triphosphates as substrates. This chain is DNA-directed RNA polymerase subunit beta', found in Sorghum bicolor (Sorghum).